Here is a 304-residue protein sequence, read N- to C-terminus: PHO85 cyclin-9 (304 aa).

One can recognise a Cyclin N-terminal domain in the interval 19 to 146 (EMIQFLATST…LLEYLNWDVR (128 aa)).

It belongs to the cyclin family. PCL1,2 subfamily. Forms a cyclin-CDK complex with PHO85.

In terms of biological role, m/G1-specific cyclin partner of the cyclin-dependent kinase (CDK) PHO85. May have a role in bud site selection in G1 phase. The sequence is that of PHO85 cyclin-9 (PCL9) from Saccharomyces cerevisiae (strain ATCC 204508 / S288c) (Baker's yeast).